Here is a 296-residue protein sequence, read N- to C-terminus: Light-independent protochlorophyllide reductase iron-sulfur ATP-binding protein (296 aa).

The interval 1-20 (MTTTLSRPTDGEGSVQVQQD) is disordered. ATP is bound by residues 39-44 (GIGKST) and lysine 68. Position 43 (serine 43) interacts with Mg(2+). [4Fe-4S] cluster is bound by residues cysteine 124 and cysteine 158. 209–210 (NR) serves as a coordination point for ATP.

Belongs to the NifH/BchL/ChlL family. As to quaternary structure, homodimer. Protochlorophyllide reductase is composed of three subunits; ChlL, ChlN and ChlB. [4Fe-4S] cluster is required as a cofactor.

It carries out the reaction chlorophyllide a + oxidized 2[4Fe-4S]-[ferredoxin] + 2 ADP + 2 phosphate = protochlorophyllide a + reduced 2[4Fe-4S]-[ferredoxin] + 2 ATP + 2 H2O. It participates in porphyrin-containing compound metabolism; chlorophyll biosynthesis (light-independent). Its function is as follows. Component of the dark-operative protochlorophyllide reductase (DPOR) that uses Mg-ATP and reduced ferredoxin to reduce ring D of protochlorophyllide (Pchlide) to form chlorophyllide a (Chlide). This reaction is light-independent. The L component serves as a unique electron donor to the NB-component of the complex, and binds Mg-ATP. The protein is Light-independent protochlorophyllide reductase iron-sulfur ATP-binding protein of Synechococcus sp. (strain CC9902).